Here is a 2005-residue protein sequence, read N- to C-terminus: Sodium channel protein type 2 subunit alpha (2005 aa).

Residues 1 to 129 (MAQSVLVPPG…KLAIKILVHS (129 aa)) lie on the Cytoplasmic side of the membrane. Serine 4 carries the phosphoserine modification. The tract at residues 28–61 (RIAEEKAKRPKQERKDEDDENGPKPNSDLEAGKS) is disordered. Lysine 38 is covalently cross-linked (Glycyl lysine isopeptide (Lys-Gly) (interchain with G-Cter in SUMO1)). One copy of the I repeat lies at 111-456 (ILTPFNPIRK…QQMLEQLKKQ (346 aa)). Residues 130–148 (LFNMLIMCTILTNCVFMTM) form a helical membrane-spanning segment. The Extracellular portion of the chain corresponds to 149–155 (SNPPDWT). A helical transmembrane segment spans residues 156 to 176 (KNVEYTFTGIYTFESLIKILA). Topologically, residues 177–190 (RGFCLEDFTFLRDP) are cytoplasmic. The helical transmembrane segment at 191 to 208 (WNWLDFTVITFAYVTEFV) threads the bilayer. Residues 209–214 (DLGNVS) lie on the Extracellular side of the membrane. Residue asparagine 212 is glycosylated (N-linked (GlcNAc...) asparagine). The helical transmembrane segment at 215 to 231 (ALRTFRVLRALKTISVI) threads the bilayer. At 232–250 (PGLKTIVGALIQSVKKLSD) the chain is on the cytoplasmic side. A helical transmembrane segment spans residues 251–270 (VMILTVFCLSVFALIGLQLF). Residues 271 to 369 (MGNLRNKCLQ…PNYGYTSFDT (99 aa)) lie on the Extracellular side of the membrane. A disulfide bridge connects residues cysteine 278 and cysteine 338. N-linked (GlcNAc...) asparagine glycans are attached at residues asparagine 285, asparagine 291, asparagine 297, asparagine 303, asparagine 308, and asparagine 340. An intramembrane region (pore-forming) is located at residues 370-394 (FSWAFLSLFRLMTQDFWENLYQLTL). Residues 395 to 401 (RAAGKTY) are Extracellular-facing. A helical transmembrane segment spans residues 402–422 (MIFFVLVIFLGSFYLINLILA). Topologically, residues 423–759 (VVAMAYEEQN…HLVNLVVMDP (337 aa)) are cytoplasmic. Serine 468, serine 471, serine 484, serine 526, serine 528, serine 531, serine 553, serine 554, serine 558, serine 573, serine 576, serine 589, serine 610, serine 623, serine 686, serine 687, and serine 721 each carry phosphoserine. Positions 494 to 529 (SSKSEKELKNRRKKKKQKEQSGEEEKNDRVRKSESE) are disordered. Residues 511–529 (KEQSGEEEKNDRVRKSESE) are compositionally biased toward basic and acidic residues. A disordered region spans residues 590–610 (ENDFADDEHSTFEDNDSRRDS). A compositionally biased stretch (basic and acidic residues) spans 596-610 (DEHSTFEDNDSRRDS). An II repeat occupies 741–1013 (CCKPWLKVKH…QIAVGRMQKG (273 aa)). Residues 760-778 (FVDLAITICIVLNTLFMAM) traverse the membrane as a helical segment. The Extracellular segment spans residues 779–789 (EHYPMTEQFSS). A helical transmembrane segment spans residues 790 to 809 (VLSVGNLVFTGIFTAEMFLK). Over 810 to 823 (IIAMDPYYYFQEGW) the chain is Cytoplasmic. Residues 824 to 843 (NIFDGFIVSLSLMELGLANV) form a helical membrane-spanning segment. Topologically, residues 844 to 845 (EG) are extracellular. Residues 846 to 863 (LSVLRSFRLLRVFKLAKS) form a helical membrane-spanning segment. At 864–879 (WPTLNMLIKIIGNSVG) the chain is on the cytoplasmic side. A helical membrane pass occupies residues 880 to 898 (ALGNLTLVLAIIVFIFAVV). Topologically, residues 899 to 927 (GMQLFGKSYKECVCKISNDCELPRWHMHD) are extracellular. Cysteine 912 and cysteine 918 are oxidised to a cystine. The binds SCN2B stretch occupies residues 917 to 918 (DC). The pore-forming intramembrane region spans 928-948 (FFHSFLIVFRVLCGEWIETMW). Residues 949–961 (DCMEVAGQTMCLT) are Extracellular-facing. Cysteines 950 and 959 form a disulfide. A helical transmembrane segment spans residues 962–982 (VFMMVMVIGNLVVLNLFLALL). The Cytoplasmic segment spans residues 983–1209 (LSSFSSDNLA…TCYKIVEHNW (227 aa)). The interval 1120–1165 (EEFSSESDMEESKEKLNATSSSEGSTVDIGAPAEGEQPEVEPEESL) is disordered. A compositionally biased stretch (acidic residues) spans 1155-1165 (EQPEVEPEESL). Residues 1190–1504 (KGKLWWNLRK…KKYYNAMKKL (315 aa)) form an III repeat. A helical transmembrane segment spans residues 1210–1227 (FETFIVFMILLSSGALAF). At 1228 to 1240 (EDIYIEQRKTIKT) the chain is on the extracellular side. Residues 1241–1259 (MLEYADKVFTYIFILEMLL) form a helical membrane-spanning segment. Residues 1260–1273 (KWVAYGFQVYFTNA) lie on the Cytoplasmic side of the membrane. Residues 1274-1292 (WCWLDFLIVDVSLVSLTAN) traverse the membrane as a helical segment. Residues 1293-1300 (ALGYSELG) lie on the Extracellular side of the membrane. The helical transmembrane segment at 1301 to 1319 (AIKSLRTLRALRPLRALSR) threads the bilayer. Residues 1320–1336 (FEGMRVVVNALLGAIPS) are Cytoplasmic-facing. A helical membrane pass occupies residues 1337–1356 (IMNVLLVCLIFWLIFSIMGV). Residues 1357–1408 (NLFAGKFYHCINYTTGEMFDVSVVNNYSECKALIESNQTARWKNVKVNFDNV) are Extracellular-facing. An intrachain disulfide couples cysteine 1366 to cysteine 1386. N-linked (GlcNAc...) asparagine glycosylation is found at asparagine 1368, asparagine 1382, and asparagine 1393. Positions 1409-1430 (GLGYLSLLQVATFKGWMDIMYA) form an intramembrane region, pore-forming. Residues 1431 to 1447 (AVDSRNVELQPKYEDNL) lie on the Extracellular side of the membrane. A helical transmembrane segment spans residues 1448 to 1469 (YMYLYFVIFIIFGSFFTLNLFI). The Cytoplasmic segment spans residues 1470 to 1532 (GVIIDNFNQQ…MVFDFVTKQV (63 aa)). A Phosphoserine; by PKC modification is found at serine 1506. One copy of the IV repeat lies at 1513 to 1811 (IPRPANKFQG…WEKFDPDATQ (299 aa)). A helical transmembrane segment spans residues 1533–1550 (FDISIMILICLNMVTMMV). The Extracellular segment spans residues 1551 to 1561 (ETDDQSQEMTN). Residues 1562-1580 (ILYWINLVFIVLFTGECVL) traverse the membrane as a helical segment. At 1581–1592 (KLISLRYYYFTI) the chain is on the cytoplasmic side. A helical transmembrane segment spans residues 1593–1610 (GWNIFDFVVVILSIVGMF). Residues 1611–1623 (LAELIEKYFVSPT) lie on the Extracellular side of the membrane. Residues 1624 to 1640 (LFRVIRLARIGRILRLI) traverse the membrane as a helical segment. Residues 1641–1659 (KGAKGIRTLLFALMMSLPA) are Cytoplasmic-facing. Residues 1660 to 1677 (LFNIGLLLFLVMFIYAIF) form a helical membrane-spanning segment. The Extracellular segment spans residues 1678-1699 (GMSNFAYVKREVGIDDMFNFET). The pore-forming intramembrane region spans 1700–1722 (FGNSMICLFQITTSAGWDGLLAP). Topologically, residues 1723–1752 (ILNSGPPDCDPDKDHPGSSVKGDCGNPSVG) are extracellular. A disulfide bridge connects residues cysteine 1731 and cysteine 1746. The helical transmembrane segment at 1753 to 1775 (IFFFVSYIIISFLVVVNMYIAVI) threads the bilayer. Topologically, residues 1776–2005 (LENFSVATEE…KGKDIRESKK (230 aa)) are cytoplasmic. The region spanning 1905–1934 (EEVSAIIIQRAYRRYLLKQKVKKVSSIYKK) is the IQ domain. Phosphoserine is present on serine 1930. Residues 1935-1964 (DKGKECDGTPIKEDTLIDKLNENSTPEKTD) are compositionally biased toward basic and acidic residues. The interval 1935–2005 (DKGKECDGTP…KGKDIRESKK (71 aa)) is disordered. Phosphothreonine occurs at positions 1943, 1963, and 1966. Serine 1971 bears the Phosphoserine mark. Positions 1979-2005 (TKPEKEKFEKDKSEKEDKGKDIRESKK) are enriched in basic and acidic residues.

This sequence belongs to the sodium channel (TC 1.A.1.10) family. Nav1.2/SCN2A subfamily. As to quaternary structure, heterooligomer of a large alpha subunit and a smaller beta subunit. Heterooligomer with SCN2B or SCN4B; disulfide-linked. Heterooligomer with SCN1B or SCN3B; non-covalently linked. Interacts with NEDD4L. Interacts with CALM. Interacts with TMEM233. Interacts with the conotoxin GVIIJ. Interacts with the spider beta/delta-theraphotoxin-Pre1a. Interacts with the conotoxin KIIIA. Interacts with the spider protoxin-II. Post-translationally, may be ubiquitinated by NEDD4L; which would promote its endocytosis. Phosphorylation at Ser-1506 by PKC in a highly conserved cytoplasmic loop slows inactivation of the sodium channel and reduces peak sodium currents. In terms of processing, sumoylated at Lys-38. Sumoylation is induced by hypoxia, increases voltage-gated sodium current and mediates the early response to acute hypoxia in neurons. Sumoylated SCN2A is located at the cell membrane.

Its subcellular location is the cell membrane. It catalyses the reaction Na(+)(in) = Na(+)(out). Functionally, mediates the voltage-dependent sodium ion permeability of excitable membranes. Assuming opened or closed conformations in response to the voltage difference across the membrane, the protein forms a sodium-selective channel through which Na(+) ions may pass in accordance with their electrochemical gradient. Implicated in the regulation of hippocampal replay occurring within sharp wave ripples (SPW-R) important for memory. In Homo sapiens (Human), this protein is Sodium channel protein type 2 subunit alpha.